A 486-amino-acid polypeptide reads, in one-letter code: MSSLKERKEAFVSGLEGGSILEINVVTSIALTSYLCANLISYNDTQNIPLGIDFVLNWVAMLLSFTLYSQDIYLLTTLCLIPSIGWFLLNYKRNLKQSKNTVKHTTKEAVQKFELTKKPFLTAYRSGMLILTCLAILAVDFQIFPRRFAKVETWGTSLMDLGVGSFVFSNGIVSSRGLFREKMKDKKDKASSIKKIFAATRSGTTLLILGLSRLFFVKNLEYQEHVTEYGVHWNFFITLSLLPPVLVLIDPITSYIPQCILAMLFSTVYQLFLIKDDSLLTYLVLSDRNTFINANREGLISFVGYCSIFLWGQTIGFFILGNKKTTNNLYKCSVTVSRDKKNRTLWDRLTTVGPSLGLLIWFIITYALSEGLYLIHPQTVSRRFANMPYVLWVVCYNTAFLLCYSLVDKLFGNSSNFYRISTLLEAMNCNGLAMFLISNVSTGLVNMCIPTIDQNDKVSIVILLIYAAFLAMVSFSLYKHKIFIKL.

Residues 20–42 (ILEINVVTSIALTSYLCANLISY) traverse the membrane as a helical segment. N-linked (GlcNAc...) asparagine glycosylation occurs at Asn-43. The next 8 membrane-spanning stretches (helical) occupy residues 48-68 (IPLG…FTLY), 71-91 (DIYL…LLNY), 119-139 (PFLT…ILAV), 153-173 (TWGT…NGIV), 197-216 (FAAT…RLFF), 229-249 (YGVH…LVLI), 254-274 (SYIP…LFLI), and 299-319 (LISF…GFFI). Asn-342 carries an N-linked (GlcNAc...) asparagine glycan. A run of 2 helical transmembrane segments spans residues 355–375 (SLGL…LYLI) and 387–407 (MPYV…YSLV). N-linked (GlcNAc...) asparagine glycosylation is present at Asn-413. The next 2 membrane-spanning stretches (helical) occupy residues 432–452 (LAMF…IPTI) and 458–478 (VSIV…FSLY).

This sequence belongs to the PIGW family.

The protein localises to the endoplasmic reticulum membrane. It participates in glycolipid biosynthesis; glycosylphosphatidylinositol-anchor biosynthesis. In terms of biological role, probable acetyltransferase, which acetylates the inositol ring of phosphatidylinositol during biosynthesis of GPI-anchor. The protein is GPI-anchored wall transfer protein 1 (GWT1) of Candida glabrata (strain ATCC 2001 / BCRC 20586 / JCM 3761 / NBRC 0622 / NRRL Y-65 / CBS 138) (Yeast).